We begin with the raw amino-acid sequence, 500 residues long: Cytochrome P450 71B26 (500 aa).

A helical transmembrane segment spans residues 1–21 (MDSIWILSLLFFIIFLLLAAF). A heme-binding site is contributed by cysteine 440.

This sequence belongs to the cytochrome P450 family. Heme is required as a cofactor.

It localises to the membrane. This is Cytochrome P450 71B26 (CYP71B26) from Arabidopsis thaliana (Mouse-ear cress).